Reading from the N-terminus, the 93-residue chain is Zinc metalloproteinase-disintegrin-like leucurogin (93 aa).

Positions 8 to 93 (PPVCGNELLE…SECPADVGHK (86 aa)) constitute a Disintegrin domain. Residues valine 10, asparagine 13, leucine 15, glutamate 17, glutamate 20, and aspartate 23 each coordinate Ca(2+). Disulfide bonds link cysteine 11–cysteine 40, cysteine 22–cysteine 35, cysteine 24–cysteine 30, cysteine 34–cysteine 57, cysteine 48–cysteine 54, cysteine 53–cysteine 79, and cysteine 66–cysteine 86. The short motif at 72-74 (ECD) is the D/ECD-tripeptide element. Ca(2+)-binding residues include aspartate 74, proline 75, glutamate 77, aspartate 89, and valine 90. Positions 74-93 (DPAEHCTGQSSECPADVGHK) are disordered.

Belongs to the venom metalloproteinase (M12B) family. P-III subfamily. In terms of assembly, monomer. Zn(2+) serves as cofactor. Post-translationally, N-glycosylated. Expressed by the venom gland.

The protein localises to the secreted. Its function is as follows. Snake venom zinc metalloprotease that possesses hemorrhagic activity. The disintegrin-like domain has been expressed and named leucurogin. This recombinant disintegrin is able to inhibit collagen-induced platelet aggregation but not ADP- or arachidonic acid-induced platelet aggregation. Furthermore, it inhibits the adhesion of human fibroblasts to collagen type I. It also reduces adhesion and migration of human fibroblasts and inhibits migration and proliferation of human and mouse melanoma cell lines (BLM, and B16-F10-Nex2). In vitro, it inhibits the vascular structures formation by endothelial cells. In addition, it inhibits the growth of experimental Ehrlich tumor and has anti-angiogenesis effect on the sponge implant model. In vivo, when intraperitoneally injected into mice, it inhibits lung metastasis of B16F10 Nex-2 cells. In the treatment of human melanoma, grafted intradermally in the nude mice flank, it inhibits tumor growth. This chain is Zinc metalloproteinase-disintegrin-like leucurogin, found in Bothrops leucurus (Whitetail lancehead).